We begin with the raw amino-acid sequence, 371 residues long: Histidinol-phosphate aminotransferase (371 aa).

Lysine 229 carries the post-translational modification N6-(pyridoxal phosphate)lysine.

The protein belongs to the class-II pyridoxal-phosphate-dependent aminotransferase family. Histidinol-phosphate aminotransferase subfamily. Homodimer. It depends on pyridoxal 5'-phosphate as a cofactor.

It carries out the reaction L-histidinol phosphate + 2-oxoglutarate = 3-(imidazol-4-yl)-2-oxopropyl phosphate + L-glutamate. The protein operates within amino-acid biosynthesis; L-histidine biosynthesis; L-histidine from 5-phospho-alpha-D-ribose 1-diphosphate: step 7/9. This chain is Histidinol-phosphate aminotransferase, found in Roseiflexus castenholzii (strain DSM 13941 / HLO8).